Consider the following 278-residue polypeptide: Dermonecrotic toxin LlSicTox-alphaIII3iii (278 aa).

His5 is an active-site residue. Positions 25 and 27 each coordinate Mg(2+). The Nucleophile role is filled by His40. Residues Cys44 and Cys50 are joined by a disulfide bond. Asp84 provides a ligand contact to Mg(2+).

The protein belongs to the arthropod phospholipase D family. Class I subfamily. It depends on Mg(2+) as a cofactor. Expressed by the venom gland.

Its subcellular location is the secreted. The catalysed reaction is an N-(acyl)-sphingosylphosphocholine = an N-(acyl)-sphingosyl-1,3-cyclic phosphate + choline. It carries out the reaction an N-(acyl)-sphingosylphosphoethanolamine = an N-(acyl)-sphingosyl-1,3-cyclic phosphate + ethanolamine. It catalyses the reaction a 1-acyl-sn-glycero-3-phosphocholine = a 1-acyl-sn-glycero-2,3-cyclic phosphate + choline. The enzyme catalyses a 1-acyl-sn-glycero-3-phosphoethanolamine = a 1-acyl-sn-glycero-2,3-cyclic phosphate + ethanolamine. In terms of biological role, dermonecrotic toxins cleave the phosphodiester linkage between the phosphate and headgroup of certain phospholipids (sphingolipid and lysolipid substrates), forming an alcohol (often choline) and a cyclic phosphate. This toxin acts on sphingomyelin (SM). It may also act on ceramide phosphoethanolamine (CPE), lysophosphatidylcholine (LPC) and lysophosphatidylethanolamine (LPE), but not on lysophosphatidylserine (LPS), and lysophosphatidylglycerol (LPG). It acts by transphosphatidylation, releasing exclusively cyclic phosphate products as second products. Induces dermonecrosis, hemolysis, increased vascular permeability, edema, inflammatory response, and platelet aggregation. The protein is Dermonecrotic toxin LlSicTox-alphaIII3iii of Loxosceles laeta (South American recluse spider).